Here is a 326-residue protein sequence, read N- to C-terminus: Adenosine receptor A1 (326 aa).

The Extracellular segment spans residues 1-10 (MPPYISAFQA). Residues 11–33 (AYIGIEVLIALVSVPGNVLVIWA) traverse the membrane as a helical segment. The Cytoplasmic segment spans residues 34–46 (VKVNQALRDATFC). The chain crosses the membrane as a helical span at residues 47–69 (FIVSLAVADVAVGALVIPLAILI). Residues 70–80 (NIGPQTYFHTC) are Extracellular-facing. C80 and C169 are joined by a disulfide. The helical transmembrane segment at 81–102 (LMVACPVLILTQSSILALLAIA) threads the bilayer. Residues 103–123 (VDRYLRVKIPLRYKTVVTQRR) are Cytoplasmic-facing. The helical transmembrane segment at 124-146 (AAVAIAGCWILSLVVGLTPMFGW) threads the bilayer. Topologically, residues 147-176 (NNLSVVEQDWRANGSVGEPVIKCEFEKVIS) are extracellular. N148 and N159 each carry an N-linked (GlcNAc...) asparagine glycan. Residues 177–201 (MEYMVYFNFFVWVLPPLLLMVLIYL) form a helical membrane-spanning segment. Topologically, residues 202–235 (EVFYLIRKQLNKKVSASSGDPQKYYGKELKIAKS) are cytoplasmic. The chain crosses the membrane as a helical span at residues 236–259 (LALILFLFALSWLPLHILNCITLF). At 260-267 (CPTCQKPS) the chain is on the extracellular side. The helical transmembrane segment at 268-292 (ILIYIAIFLTHGNSAMNPIVYAFRI) threads the bilayer. Over 293 to 326 (HKFRVTFLKIWNDHFRCQPKPPIDEDLPEEKAED) the chain is Cytoplasmic. C309 is lipidated: S-palmitoyl cysteine.

This sequence belongs to the G-protein coupled receptor 1 family. As to expression, widely expressed in brain and spinal cord.

It localises to the cell membrane. Its function is as follows. Receptor for adenosine. The activity of this receptor is mediated by G proteins which inhibit adenylyl cyclase. This Rattus norvegicus (Rat) protein is Adenosine receptor A1 (Adora1).